Here is a 758-residue protein sequence, read N- to C-terminus: GPI ethanolamine phosphate transferase 2 (758 aa).

Residues asparagine 28, asparagine 77, and asparagine 178 are each glycosylated (N-linked (GlcNAc...) asparagine). Helical transmembrane passes span 405–425 (LVAISILGACSILSLILFRNL), 431–451 (LLAFAPFVVQNIIIVFSSSFI), and 455–472 (HVIWYFAAVSLSLLQLLN). Asparagine 493 is a glycosylation site (N-linked (GlcNAc...) asparagine). The next 6 membrane-spanning stretches (helical) occupy residues 533-553 (PSPINFLSSMFIAFYKLMPII), 561-581 (PIIASFDYTFFVRIIWSLLLI), 598-618 (LFILLLTRLENMGLYLLYDIW), 667-687 (IFAVGILLFTSVFAGALWWCL), 698-718 (VKTFWIMSSISLTFLCISCFI), and 733-753 (LLYNASWASMYFLAKCLISTI).

Belongs to the PIGG/PIGN/PIGO family. PIGG subfamily.

It localises to the endoplasmic reticulum membrane. It participates in glycolipid biosynthesis; glycosylphosphatidylinositol-anchor biosynthesis. Its function is as follows. Ethanolamine phosphate transferase involved in glycosylphosphatidylinositol-anchor biosynthesis. Transfers ethanolamine phosphate to the GPI second mannose. The chain is GPI ethanolamine phosphate transferase 2 (las21) from Schizosaccharomyces pombe (strain 972 / ATCC 24843) (Fission yeast).